A 1425-amino-acid chain; its full sequence is Zinc finger FYVE domain-containing protein 9 (1425 aa).

Disordered stretches follow at residues 201 to 255 and 291 to 352; these read ESTE…IGRD and EDLT…SGRN. A compositionally biased stretch (basic and acidic residues) spans 202 to 225; the sequence is STEKDMNSEKQMDPLNRPKTEGRS. 2 stretches are compositionally biased toward polar residues: residues 230–245 and 296–312; these read CPTS…SPSQ and KISS…SFSH. Serine 306 and serine 668 each carry phosphoserine. Residues 699–758 form an FYVE-type zinc finger; the sequence is DSQAPNCMKCEARFTFTKRRHHCRACGKVFCASCCSLKCKLLYMDRKEARVCVICHSVLM. 8 residues coordinate Zn(2+): cysteine 705, cysteine 708, cysteine 721, cysteine 724, cysteine 729, cysteine 732, cysteine 750, and cysteine 753. Residues 767–823 form an SBD region; it reads MSASSQSPNPNNPAEYCSTIPPLQQAQASGALSSPPPTVMVPVGVLKHPGAEVAQPR.

As to quaternary structure, interacts (via the SBD region) with SMAD2; the interaction recruits SMAD2 to the TGF-beta receptor and is disrupted by phosphorylation of SMAD2 upon TGF-beta receptor activation. Interacts with SMAD3. Interacts with TGFBR1 and TGFBR2; the interaction recruits SMAD2 to the TGF-beta receptor. Interacts with PML. In terms of tissue distribution, ubiquitous. In the brain found primarily in the cerebrovascular smooth muscle cells and reactive astrocytes.

The protein localises to the cytoplasm. It localises to the early endosome membrane. In terms of biological role, early endosomal protein that functions to recruit SMAD2/SMAD3 to intracellular membranes and to the TGF-beta receptor. Plays a significant role in TGF-mediated signaling by regulating the subcellular location of SMAD2 and SMAD3 and modulating the transcriptional activity of the SMAD3/SMAD4 complex. Possibly associated with TGF-beta receptor internalization. In Homo sapiens (Human), this protein is Zinc finger FYVE domain-containing protein 9 (ZFYVE9).